Consider the following 364-residue polypeptide: DNA polymerase IV (364 aa).

The region spanning 14–198 is the UmuC domain; that stretch reads IIHIDMDAFF…LPIEKFHGVG (185 aa). Residues Asp18 and Asp116 each contribute to the Mg(2+) site. Residue Glu117 is part of the active site.

The protein belongs to the DNA polymerase type-Y family. Monomer. It depends on Mg(2+) as a cofactor.

The protein resides in the cytoplasm. The catalysed reaction is DNA(n) + a 2'-deoxyribonucleoside 5'-triphosphate = DNA(n+1) + diphosphate. Its function is as follows. Poorly processive, error-prone DNA polymerase involved in untargeted mutagenesis. Copies undamaged DNA at stalled replication forks, which arise in vivo from mismatched or misaligned primer ends. These misaligned primers can be extended by PolIV. Exhibits no 3'-5' exonuclease (proofreading) activity. May be involved in translesional synthesis, in conjunction with the beta clamp from PolIII. This chain is DNA polymerase IV, found in Streptococcus pyogenes serotype M18 (strain MGAS8232).